The primary structure comprises 215 residues: 3-isopropylmalate dehydratase small subunit (215 aa).

Belongs to the LeuD family. LeuD type 1 subfamily. In terms of assembly, heterodimer of LeuC and LeuD.

It catalyses the reaction (2R,3S)-3-isopropylmalate = (2S)-2-isopropylmalate. Its pathway is amino-acid biosynthesis; L-leucine biosynthesis; L-leucine from 3-methyl-2-oxobutanoate: step 2/4. Functionally, catalyzes the isomerization between 2-isopropylmalate and 3-isopropylmalate, via the formation of 2-isopropylmaleate. The sequence is that of 3-isopropylmalate dehydratase small subunit from Xanthomonas euvesicatoria pv. vesicatoria (strain 85-10) (Xanthomonas campestris pv. vesicatoria).